Here is a 138-residue protein sequence, read N- to C-terminus: Cysteine desulfuration protein SufE (138 aa).

The active-site Cysteine persulfide intermediate is the cysteine 51.

The protein belongs to the SufE family. As to quaternary structure, homodimer. Interacts with SufS.

It localises to the cytoplasm. It functions in the pathway cofactor biosynthesis; iron-sulfur cluster biosynthesis. Participates in cysteine desulfuration mediated by SufS. Cysteine desulfuration mobilizes sulfur from L-cysteine to yield L-alanine and constitutes an essential step in sulfur metabolism for biosynthesis of a variety of sulfur-containing biomolecules. Functions as a sulfur acceptor for SufS, by mediating the direct transfer of the sulfur atom from the S-sulfanylcysteine of SufS, an intermediate product of cysteine desulfuration process. The chain is Cysteine desulfuration protein SufE from Klebsiella pneumoniae subsp. pneumoniae (strain ATCC 700721 / MGH 78578).